We begin with the raw amino-acid sequence, 515 residues long: 1-pyrroline-5-carboxylate dehydrogenase 2 (515 aa).

Active-site residues include Glu-286 and Cys-320.

It belongs to the aldehyde dehydrogenase family. RocA subfamily.

It catalyses the reaction L-glutamate 5-semialdehyde + NAD(+) + H2O = L-glutamate + NADH + 2 H(+). It functions in the pathway amino-acid degradation; L-proline degradation into L-glutamate; L-glutamate from L-proline: step 2/2. The sequence is that of 1-pyrroline-5-carboxylate dehydrogenase 2 (rocA2) from Halalkalibacterium halodurans (strain ATCC BAA-125 / DSM 18197 / FERM 7344 / JCM 9153 / C-125) (Bacillus halodurans).